Here is a 319-residue protein sequence, read N- to C-terminus: Cytochrome f (319 aa).

The first 35 residues, 1–35, serve as a signal peptide directing secretion; the sequence is MQNKDACKSLSSWVSLSISLLVLTVPLIWPYNSTA. 4 residues coordinate heme: Phe-36, Cys-56, Cys-59, and His-60. The chain crosses the membrane as a helical span at residues 285 to 305; sequence IQGLLVFFASVILAQIFLVLK.

The protein belongs to the cytochrome f family. As to quaternary structure, the 4 large subunits of the cytochrome b6-f complex are cytochrome b6, subunit IV (17 kDa polypeptide, petD), cytochrome f and the Rieske protein, while the 4 small subunits are PetG, PetL, PetM and PetN. The complex functions as a dimer. Requires heme as cofactor.

The protein resides in the plastid. Its subcellular location is the chloroplast thylakoid membrane. Functionally, component of the cytochrome b6-f complex, which mediates electron transfer between photosystem II (PSII) and photosystem I (PSI), cyclic electron flow around PSI, and state transitions. The protein is Cytochrome f of Staurastrum punctulatum (Green alga).